The primary structure comprises 509 residues: Sorting nexin MVP1 (509 aa).

Over residues 1-25 (MDTYSGQNGWADTSNASPWGDTNDT) the composition is skewed to polar residues. Residues 1–28 (MDTYSGQNGWADTSNASPWGDTNDTMPI) form a disordered region. The 120-residue stretch at 126-245 (QLDIISIEEI…TFLTVPTDLT (120 aa)) folds into the PX domain. The a 1,2-diacyl-sn-glycero-3-phospho-(1D-myo-inositol-3-phosphate) site is built by arginine 170, serine 172, lysine 196, and arginine 211.

It belongs to the sorting nexin family.

The protein resides in the cytoplasm. Its subcellular location is the membrane. Its function is as follows. Required for vacuolar protein sorting. The sequence is that of Sorting nexin MVP1 (MVP1) from Candida glabrata (strain ATCC 2001 / BCRC 20586 / JCM 3761 / NBRC 0622 / NRRL Y-65 / CBS 138) (Yeast).